The primary structure comprises 365 residues: Peptide chain release factor 2 (365 aa).

An N5-methylglutamine modification is found at Gln-252.

Belongs to the prokaryotic/mitochondrial release factor family. Post-translationally, methylated by PrmC. Methylation increases the termination efficiency of RF2.

Its subcellular location is the cytoplasm. Its function is as follows. Peptide chain release factor 2 directs the termination of translation in response to the peptide chain termination codons UGA and UAA. The sequence is that of Peptide chain release factor 2 from Colwellia psychrerythraea (strain 34H / ATCC BAA-681) (Vibrio psychroerythus).